We begin with the raw amino-acid sequence, 363 residues long: MSRFQPYLTEAQENDLRRIAQAICAPGKGILAADESTATMGKRLQQIGVENNEENRRLYRQLLFSADHKLAENISGVILFEETLHQKSDDGKTLPTLLAERNIIPGIKVDKGVVPLAGTDNETTTQGLDDLASRCAEYWRLGCRFAKWRCVLKISSHTPSYLAMLENANVLARYASICQQNGLVPIVEPEVLPDGDHDLLTAQRVTEQVLAFVYKALADHHVYLEGTLLKPNMVTAGQACKKAYTPQENALATVRALQRTVPPAVPGITFLSGGQSELDATKNLNEINKIPGPKPWALTFSFGRALQASVLATWKGKKENVHAAQEELLKLAKANGAAAVGKFEGNMGTTLGDKSLFVANHAY.

The substrate site is built by Arg56 and Lys147. Glu188 acts as the Proton acceptor in catalysis. Catalysis depends on Lys230, which acts as the Schiff-base intermediate with dihydroxyacetone-P.

Belongs to the class I fructose-bisphosphate aldolase family.

The catalysed reaction is beta-D-fructose 1,6-bisphosphate = D-glyceraldehyde 3-phosphate + dihydroxyacetone phosphate. The protein operates within carbohydrate degradation; glycolysis; D-glyceraldehyde 3-phosphate and glycerone phosphate from D-glucose: step 4/4. The polypeptide is Fructose-bisphosphate aldolase (Schistosoma mansoni (Blood fluke)).